A 647-amino-acid chain; its full sequence is MGKIRKLDDQLSNLIAAGEVVERPASVVKELVENSIDANSTSIEIHLEEAGLSKIRIIDNGDGIAEEDCIVAFERHATSKIKDENDLFRIRTLGFRGEALPSIASVSELELITSTGDAPGTHLIIKGGDIIKQEKTASRKGTDITVQNLFFNTPARLKYMKTIHTELGNITDIVYRIAMSHPEVSLKLFHNEKKLLHTSGNGDVRQVLASIYSIQVAKKLVPIEAESLDFTIKGYVTLPEVTRASRNYMSTIVNGRYVRNFVLMKAIQQGYHTLLPVGRYPIGFLSIEMDPMLVDVNVHPAKLEVRFSKEQELLKLIEETLQAAFKKIQLIPDAGVTTKKKEKDESVQEQFQFEHAKPKEPSMPDIVLPTGMDAKQEEPQAVKQPPQLWQPPKQEWQPPQSLIREEQSWQPSTKPIIEEPIQEEKSWDSNEEDFELEELEEEVREIKEIEMNGNDLPPLYPIGQMHGTYIFAQNDKGLYMIDQHAAQERINYEYFRDKVGRVAQEVQELLVPYRIDLSLTEFLRVEEQLEELKKVGLFLEQFGHQSFIVRSHPTWFPKGQETEIIDEMMEQVVKLKKVDIKKLREEAAIMMSCKASIKANQYLTNDQIFALLEELRTTTNPYTCPHGRPILVHHSTYELEKMFKRVM.

The segment at 375–395 is disordered; that stretch reads KQEEPQAVKQPPQLWQPPKQE. Residues 383–395 show a composition bias toward low complexity; that stretch reads KQPPQLWQPPKQE.

It belongs to the DNA mismatch repair MutL/HexB family.

This protein is involved in the repair of mismatches in DNA. It is required for dam-dependent methyl-directed DNA mismatch repair. May act as a 'molecular matchmaker', a protein that promotes the formation of a stable complex between two or more DNA-binding proteins in an ATP-dependent manner without itself being part of a final effector complex. The protein is DNA mismatch repair protein MutL of Bacillus cereus (strain B4264).